The sequence spans 273 residues: 3-methyl-2-oxobutanoate hydroxymethyltransferase (273 aa).

Mg(2+) is bound by residues Asp-53 and Asp-92. 3-methyl-2-oxobutanoate is bound by residues 53–54 (DS), Asp-92, and Lys-122. Glu-124 lines the Mg(2+) pocket. The active-site Proton acceptor is the Glu-191.

It belongs to the PanB family. In terms of assembly, homodecamer; pentamer of dimers. Mg(2+) serves as cofactor.

It is found in the cytoplasm. The enzyme catalyses 3-methyl-2-oxobutanoate + (6R)-5,10-methylene-5,6,7,8-tetrahydrofolate + H2O = 2-dehydropantoate + (6S)-5,6,7,8-tetrahydrofolate. It participates in cofactor biosynthesis; (R)-pantothenate biosynthesis; (R)-pantoate from 3-methyl-2-oxobutanoate: step 1/2. Catalyzes the reversible reaction in which hydroxymethyl group from 5,10-methylenetetrahydrofolate is transferred onto alpha-ketoisovalerate to form ketopantoate. The polypeptide is 3-methyl-2-oxobutanoate hydroxymethyltransferase (Bacteroides fragilis (strain ATCC 25285 / DSM 2151 / CCUG 4856 / JCM 11019 / LMG 10263 / NCTC 9343 / Onslow / VPI 2553 / EN-2)).